Consider the following 422-residue polypeptide: Lactoyl-CoA dehydratase subunit alpha (422 aa).

It belongs to the FldB/FldC dehydratase alpha/beta subunit family. In terms of assembly, heterodimer of an alpha (LcdA) and a beta (LcdB) subunit. It depends on [4Fe-4S] cluster as a cofactor. Requires FMN as cofactor. Riboflavin serves as cofactor. The cofactor is Mg(2+).

The catalysed reaction is (R)-lactoyl-CoA = acryloyl-CoA + H2O. It carries out the reaction (2R)-hydroxybutanoyl-CoA = (2E)-butenoyl-CoA + H2O. Activated by the LcdC protein. Its function is as follows. Involved in the acrylate pathway for the conversion of D-lactic acid to propionic acid. Catalyzes the reversible dehydration of Lactoyl-CoA and 2-hydroxybutyroyl-CoA to acryloyl-CoA and crotonyl-CoA, respectively. In Anaerotignum propionicum (Clostridium propionicum), this protein is Lactoyl-CoA dehydratase subunit alpha (lcdA).